A 215-amino-acid polypeptide reads, in one-letter code: Cytochrome b6 (215 aa).

A helical transmembrane segment spans residues 32–52 (IFYCFGGITLTCFLIQVATGF). C35 serves as a coordination point for heme c. Heme b is bound by residues H86 and H100. The next 3 membrane-spanning stretches (helical) occupy residues 90–110 (ASMMVMMLILHVFRVYLTGGF), 116–136 (LTWVTGVILAVITVSFGVTGY), and 186–206 (LHTFVLPLLTAVFMLMHFLMI). 2 residues coordinate heme b: H187 and H202.

The protein belongs to the cytochrome b family. PetB subfamily. In terms of assembly, the 4 large subunits of the cytochrome b6-f complex are cytochrome b6, subunit IV (17 kDa polypeptide, PetD), cytochrome f and the Rieske protein, while the 4 small subunits are PetG, PetL, PetM and PetN. The complex functions as a dimer. Heme b serves as cofactor. It depends on heme c as a cofactor.

The protein resides in the plastid. It is found in the chloroplast thylakoid membrane. Its function is as follows. Component of the cytochrome b6-f complex, which mediates electron transfer between photosystem II (PSII) and photosystem I (PSI), cyclic electron flow around PSI, and state transitions. The sequence is that of Cytochrome b6 from Nephroselmis olivacea (Green alga).